Reading from the N-terminus, the 317-residue chain is MPVLGSQRRLLGSLNCTPPATFPLMLAPNRTGPQCLEVSIPNGLFLSLGLVSLVENVLVVAAIAKNSNLHSPMYYFICCLAVSDLLVSVSNVLETAVMLLLEAGALAARAAVVQQLDNVIDVLICGSMVSSLCFLGAIAVDRYISIFYALRYHSVVTLPRAWRIIAAIWVASILTSLLFITYYNHTVVLLCLVGFFIAMLALMAVLYVHMLARACQHARGIARLQKRQRPIHRGFGLKGAATLTILLGVFFLCWGPFFLHLSLIVLCPQHPTCGCIFKNFNLFLALIICNAIVDPLIYAFRSQELRKTLQEVLQCSW.

Over 1-37 (MPVLGSQRRLLGSLNCTPPATFPLMLAPNRTGPQCLE) the chain is Extracellular. Asn-29 is a glycosylation site (N-linked (GlcNAc...) asparagine). The helical transmembrane segment at 38–63 (VSIPNGLFLSLGLVSLVENVLVVAAI) threads the bilayer. At 64 to 72 (AKNSNLHSP) the chain is on the cytoplasmic side. The helical transmembrane segment at 73–93 (MYYFICCLAVSDLLVSVSNVL) threads the bilayer. Residues 94-118 (ETAVMLLLEAGALAARAAVVQQLDN) are Extracellular-facing. A helical transmembrane segment spans residues 119–140 (VIDVLICGSMVSSLCFLGAIAV). Residues 141–163 (DRYISIFYALRYHSVVTLPRAWR) lie on the Cytoplasmic side of the membrane. Residues 164 to 183 (IIAAIWVASILTSLLFITYY) form a helical membrane-spanning segment. The Extracellular portion of the chain corresponds to 184–191 (NHTVVLLC). Residues 192–211 (LVGFFIAMLALMAVLYVHML) form a helical membrane-spanning segment. Residues 212-240 (ARACQHARGIARLQKRQRPIHRGFGLKGA) are Cytoplasmic-facing. A helical transmembrane segment spans residues 241–266 (ATLTILLGVFFLCWGPFFLHLSLIVL). Residues 267-279 (CPQHPTCGCIFKN) lie on the Extracellular side of the membrane. Residues 280-300 (FNLFLALIICNAIVDPLIYAF) form a helical membrane-spanning segment. Residues 301 to 317 (RSQELRKTLQEVLQCSW) are Cytoplasmic-facing. Cys-315 carries the S-palmitoyl cysteine lipid modification.

Belongs to the G-protein coupled receptor 1 family. As to quaternary structure, interacts with MGRN1, but does not undergo MGRN1-mediated ubiquitination; this interaction competes with GNAS-binding and thus inhibits agonist-induced cAMP production. Interacts with OPN3; the interaction results in a decrease in MC1R-mediated cAMP signaling and ultimately a decrease in melanin production in melanocytes.

Its subcellular location is the cell membrane. Its function is as follows. Receptor for MSH (alpha, beta and gamma) and ACTH. The activity of this receptor is mediated by G proteins which activate adenylate cyclase. Mediates melanogenesis, the production of eumelanin (black/brown) and phaeomelanin (red/yellow), via regulation of cAMP signaling in melanocytes. The protein is Melanocyte-stimulating hormone receptor (MC1R) of Rangifer tarandus (Reindeer).